The sequence spans 1051 residues: Carbamoyl phosphate synthase large chain (1051 aa).

Residues 1 to 399 (MKETPKKVLV…SLQKAVRMLD (399 aa)) are carboxyphosphate synthetic domain. ATP-binding residues include arginine 127, arginine 167, glycine 173, glycine 174, lysine 206, leucine 208, glutamate 213, glycine 239, valine 240, histidine 241, glutamine 282, and glutamate 296. An ATP-grasp 1 domain is found at 131-325 (RETMIENNLP…LAYVSAKLAL (195 aa)). Residues glutamine 282, glutamate 296, and asparagine 298 each contribute to the Mg(2+) site. Mn(2+) is bound by residues glutamine 282, glutamate 296, and asparagine 298. Positions 400 to 548 (IGEPGVVGGK…LTYNGTEDDL (149 aa)) are oligomerization domain. The interval 549–930 (EFSQGNKLLI…LKSWLSSIPN (382 aa)) is carbamoyl phosphate synthetic domain. The ATP-grasp 2 domain maps to 673-863 (SKLLDKLGIS…LINESMKAIF (191 aa)). ATP is bound by residues arginine 709, lysine 748, isoleucine 750, glutamate 755, glycine 779, valine 780, histidine 781, serine 782, glutamine 822, and glutamate 834. Positions 822, 834, and 836 each coordinate Mg(2+). Residues glutamine 822, glutamate 834, and asparagine 836 each contribute to the Mn(2+) site. The region spanning 930 to 1051 (NRIPNKNGIA…FEISEYGGGI (122 aa)) is the MGS-like domain. The allosteric domain stretch occupies residues 931–1051 (RIPNKNGIAL…FEISEYGGGI (121 aa)).

The protein belongs to the CarB family. In terms of assembly, composed of two chains; the small (or glutamine) chain promotes the hydrolysis of glutamine to ammonia, which is used by the large (or ammonia) chain to synthesize carbamoyl phosphate. Tetramer of heterodimers (alpha,beta)4. The cofactor is Mg(2+). It depends on Mn(2+) as a cofactor.

The enzyme catalyses hydrogencarbonate + L-glutamine + 2 ATP + H2O = carbamoyl phosphate + L-glutamate + 2 ADP + phosphate + 2 H(+). It catalyses the reaction hydrogencarbonate + NH4(+) + 2 ATP = carbamoyl phosphate + 2 ADP + phosphate + 2 H(+). It participates in amino-acid biosynthesis; L-arginine biosynthesis; carbamoyl phosphate from bicarbonate: step 1/1. Its pathway is pyrimidine metabolism; UMP biosynthesis via de novo pathway; (S)-dihydroorotate from bicarbonate: step 1/3. Functionally, large subunit of the glutamine-dependent carbamoyl phosphate synthetase (CPSase). CPSase catalyzes the formation of carbamoyl phosphate from the ammonia moiety of glutamine, carbonate, and phosphate donated by ATP, constituting the first step of 2 biosynthetic pathways, one leading to arginine and/or urea and the other to pyrimidine nucleotides. The large subunit (synthetase) binds the substrates ammonia (free or transferred from glutamine from the small subunit), hydrogencarbonate and ATP and carries out an ATP-coupled ligase reaction, activating hydrogencarbonate by forming carboxy phosphate which reacts with ammonia to form carbamoyl phosphate. The polypeptide is Carbamoyl phosphate synthase large chain (Saccharolobus islandicus (strain M.16.27) (Sulfolobus islandicus)).